Here is a 239-residue protein sequence, read N- to C-terminus: Probable transcriptional regulatory protein BAA_0622 (239 aa).

The protein belongs to the TACO1 family. YeeN subfamily.

The protein resides in the cytoplasm. The sequence is that of Probable transcriptional regulatory protein BAA_0622 from Bacillus anthracis (strain A0248).